The sequence spans 360 residues: Probable dual-specificity RNA methyltransferase RlmN (360 aa).

Residue glutamate 91 is the Proton acceptor of the active site. A Radical SAM core domain is found at 97–335 (QHYGQSVCVT…CVVRQEHGTD (239 aa)). A disulfide bond links cysteine 104 and cysteine 340. The [4Fe-4S] cluster site is built by cysteine 111, cysteine 115, and cysteine 118. S-adenosyl-L-methionine-binding positions include 163–164 (GE), serine 195, 218–220 (SLH), and asparagine 296. Cysteine 340 (S-methylcysteine intermediate) is an active-site residue.

It belongs to the radical SAM superfamily. RlmN family. Requires [4Fe-4S] cluster as cofactor.

The protein resides in the cytoplasm. It catalyses the reaction adenosine(2503) in 23S rRNA + 2 reduced [2Fe-2S]-[ferredoxin] + 2 S-adenosyl-L-methionine = 2-methyladenosine(2503) in 23S rRNA + 5'-deoxyadenosine + L-methionine + 2 oxidized [2Fe-2S]-[ferredoxin] + S-adenosyl-L-homocysteine. The catalysed reaction is adenosine(37) in tRNA + 2 reduced [2Fe-2S]-[ferredoxin] + 2 S-adenosyl-L-methionine = 2-methyladenosine(37) in tRNA + 5'-deoxyadenosine + L-methionine + 2 oxidized [2Fe-2S]-[ferredoxin] + S-adenosyl-L-homocysteine. In terms of biological role, specifically methylates position 2 of adenine 2503 in 23S rRNA and position 2 of adenine 37 in tRNAs. The chain is Probable dual-specificity RNA methyltransferase RlmN from Streptococcus equi subsp. equi (strain 4047).